A 517-amino-acid chain; its full sequence is L-amino-acid oxidase (517 aa).

The first 18 residues, 1–18, serve as a signal peptide directing secretion; it reads MNVFFMFSLLFLAALESC. A disulfide bridge connects residues C29 and C192. FAD contacts are provided by residues 62-63, 82-83, R90, and 106-109; these read MA, EA, and GPMR. Position 109 (R109) interacts with substrate. N191 carries N-linked (GlcNAc...) asparagine glycosylation. Position 280 (V280) interacts with FAD. A disulfide bridge connects residues C350 and C431. N-linked (GlcNAc...) asparagine glycosylation is present at N380. A substrate-binding site is contributed by Y391. FAD-binding positions include E476 and 483–488; that span reads GWLDST. 483–484 contacts substrate; that stretch reads GW.

Belongs to the flavin monoamine oxidase family. FIG1 subfamily. Homodimer; non-covalently linked. It depends on FAD as a cofactor. N-glycosylated. In terms of tissue distribution, expressed by the venom gland.

The protein localises to the secreted. It catalyses the reaction an L-alpha-amino acid + O2 + H2O = a 2-oxocarboxylate + H2O2 + NH4(+). Functionally, catalyzes an oxidative deamination of predominantly hydrophobic and aromatic L-amino acids, thus producing hydrogen peroxide that may contribute to the diverse toxic effects of this enzyme. Exhibits diverse biological activities, such as hemorrhage, hemolysis, edema, apoptosis of vascular endothelial cells or tumor cell lines, antibacterial and antiparasitic activities, as well as regulation of platelet aggregation. Effects of snake L-amino oxidases on platelets are controversial, since they either induce aggregation or inhibit agonist-induced aggregation. These different effects are probably due to different experimental conditions. The chain is L-amino-acid oxidase from Notechis scutatus scutatus (Mainland tiger snake).